A 1187-amino-acid polypeptide reads, in one-letter code: Serine/threonine-protein kinase SIK3 homolog (1187 aa).

Residues 1-15 (MAAVSSGAAAAAGIP) are compositionally biased toward low complexity. The disordered stretch occupies residues 1 to 41 (MAAVSSGAAAAAGIPNPNPNRERPQQQQQQQPASAALHPVA). In terms of domain architecture, Protein kinase spans 59 to 310 (YEMERTIGKG…MEQICKNKWM (252 aa)). ATP-binding positions include 65-73 (IGKGNFAVV) and Lys-88. Residue Asp-181 is the Proton acceptor of the active site. Thr-214 carries the post-translational modification Phosphothreonine. Ser-218 is subject to Phosphoserine. A UBA domain is found at 337–377 (LINEQVLMAMAEMGFDRERTLQSLHADSYDHYSATYSLLSD). 3 disordered regions span residues 548-587 (LKRP…VQRS), 697-776 (IQPS…PPGS), and 1060-1092 (CADA…GALQ). A compositionally biased stretch (acidic residues) spans 570-581 (VDEEGSDAEPDP). Over residues 739–749 (VQYQHGSALYQ) the composition is skewed to polar residues.

This sequence belongs to the protein kinase superfamily. CAMK Ser/Thr protein kinase family. SNF1 subfamily. Mg(2+) is required as a cofactor.

The catalysed reaction is L-seryl-[protein] + ATP = O-phospho-L-seryl-[protein] + ADP + H(+). It carries out the reaction L-threonyl-[protein] + ATP = O-phospho-L-threonyl-[protein] + ADP + H(+). The sequence is that of Serine/threonine-protein kinase SIK3 homolog from Danio rerio (Zebrafish).